A 116-amino-acid polypeptide reads, in one-letter code: Large ribosomal subunit protein bL19 (116 aa).

Belongs to the bacterial ribosomal protein bL19 family.

In terms of biological role, this protein is located at the 30S-50S ribosomal subunit interface and may play a role in the structure and function of the aminoacyl-tRNA binding site. The polypeptide is Large ribosomal subunit protein bL19 (Clostridium beijerinckii (strain ATCC 51743 / NCIMB 8052) (Clostridium acetobutylicum)).